Here is a 734-residue protein sequence, read N- to C-terminus: MATKFPKFSQALAQDPTTRRLWFGIATAHDFESHDGMTEERLYQKIFASHFGQLAIIFLWTSGNLFHVAWQGNFEQWVQDPLHIRPIAHAIWDPHFGQAAVEAFTRGGASGPVNISTSGVYQWWYTIGIRTNQELYVGSIFLLVLAGLFLFAGWLHLQPSFQPALSWFKNAESRLNHHLAGLFGVSSLAWTGHLVHVAIPESRGQHVGWDNFLTVLPHPAGLTPFFTGNWAAYAENPDSLSQLFGTGEGSGTAILTFLGGFHPQTQSLWLTDMAHHHLAIAVVFILAGHMYRTIFGIGHSMREILEAQTPPSGRLGAGHKGLYDTVNNSLHFQLGLALASVGTICSLVAQHMYSLPPYAFLAQDFTTQASLYTHHQYIAGFIMCGAFAHGAIFFVRDYDPEANRGNVLARVLDHKEAIISHLSWVSLFLGFHTLGLYVHNDVVQAFGTPEKQILIEPVFAQWIQAAHGKTVYGFDFLLSSATSAPSLAGQSLWLPGWLQGINSDTNSLFLTIGPGDFLVHHAIALGLHTTTLILVKGALDARGSKLMPDKKDFGYSFPCDGPGRGGTCDISAWDAFYLAVFWMLNTIGWVTFYFHWKHLGIWQGNVNQFNESSTYLMGWLRDYLWLNSSQLINGYNPFGMNSLSVWAWMFLFGHLIYATGFMFLISWRGYWQELIETLAWAHERTPLANLVRWRDKPVALSIVQARLVGLTHFSVGYVLTYAAFLIASTSGKFG.

8 helical membrane passes run isoleucine 46–alanine 69, leucine 135–glutamine 158, leucine 175–isoleucine 199, methionine 273–tyrosine 291, leucine 330–tyrosine 353, alanine 369–valine 395, alanine 417–histidine 439, and phenylalanine 517–valine 535. Residues cysteine 559 and cysteine 568 each coordinate [4Fe-4S] cluster. 2 helical membrane-spanning segments follow: residues alanine 575–tryptophan 596 and leucine 643–isoleucine 665. 3 residues coordinate chlorophyll a: histidine 654, methionine 662, and tyrosine 670. A phylloquinone-binding site is contributed by tryptophan 671. The chain crosses the membrane as a helical span at residues leucine 707–alanine 727.

Belongs to the PsaA/PsaB family. As to quaternary structure, the PsaA/B heterodimer binds the P700 chlorophyll special pair and subsequent electron acceptors. PSI consists of a core antenna complex that captures photons, and an electron transfer chain that converts photonic excitation into a charge separation. The eukaryotic PSI reaction center is composed of at least 11 subunits. The cofactor is P700 is a chlorophyll a/chlorophyll a' dimer, A0 is one or more chlorophyll a, A1 is one or both phylloquinones and FX is a shared 4Fe-4S iron-sulfur center..

Its subcellular location is the plastid. It localises to the chloroplast thylakoid membrane. It catalyses the reaction reduced [plastocyanin] + hnu + oxidized [2Fe-2S]-[ferredoxin] = oxidized [plastocyanin] + reduced [2Fe-2S]-[ferredoxin]. In terms of biological role, psaA and PsaB bind P700, the primary electron donor of photosystem I (PSI), as well as the electron acceptors A0, A1 and FX. PSI is a plastocyanin/cytochrome c6-ferredoxin oxidoreductase, converting photonic excitation into a charge separation, which transfers an electron from the donor P700 chlorophyll pair to the spectroscopically characterized acceptors A0, A1, FX, FA and FB in turn. Oxidized P700 is reduced on the lumenal side of the thylakoid membrane by plastocyanin or cytochrome c6. This Chlorella vulgaris (Green alga) protein is Photosystem I P700 chlorophyll a apoprotein A2.